A 719-amino-acid polypeptide reads, in one-letter code: DNA ligase (719 aa).

Residues 42–46 (DAEYD), 91–92 (SL), and Glu-125 contribute to the NAD(+) site. Residue Lys-127 is the N6-AMP-lysine intermediate of the active site. Arg-148, Glu-184, Lys-300, and Lys-324 together coordinate NAD(+). Zn(2+) is bound by residues Cys-429, Cys-432, Cys-447, and Cys-453. Residues 638-719 (TASSPIAGKT…WLQLIEGSYI (82 aa)) enclose the BRCT domain.

This sequence belongs to the NAD-dependent DNA ligase family. LigA subfamily. Mg(2+) is required as a cofactor. Mn(2+) serves as cofactor.

The enzyme catalyses NAD(+) + (deoxyribonucleotide)n-3'-hydroxyl + 5'-phospho-(deoxyribonucleotide)m = (deoxyribonucleotide)n+m + AMP + beta-nicotinamide D-nucleotide.. Its function is as follows. DNA ligase that catalyzes the formation of phosphodiester linkages between 5'-phosphoryl and 3'-hydroxyl groups in double-stranded DNA using NAD as a coenzyme and as the energy source for the reaction. It is essential for DNA replication and repair of damaged DNA. The protein is DNA ligase of Bartonella quintana (strain Toulouse) (Rochalimaea quintana).